Reading from the N-terminus, the 292-residue chain is Ribosomal protein L11 methyltransferase (292 aa).

Positions 144, 165, 187, and 229 each coordinate S-adenosyl-L-methionine.

Belongs to the methyltransferase superfamily. PrmA family.

The protein localises to the cytoplasm. The catalysed reaction is L-lysyl-[protein] + 3 S-adenosyl-L-methionine = N(6),N(6),N(6)-trimethyl-L-lysyl-[protein] + 3 S-adenosyl-L-homocysteine + 3 H(+). Functionally, methylates ribosomal protein L11. This Pseudomonas fluorescens (strain ATCC BAA-477 / NRRL B-23932 / Pf-5) protein is Ribosomal protein L11 methyltransferase.